A 114-amino-acid chain; its full sequence is DNA-binding protein rrnAC3180 (114 aa).

Acidic residues predominate over residues 1–11 (MSGDPSEEELE). The interval 1 to 45 (MSGDPSEEELEELRKKKMEQLKEQQGGEGEGQEAAQQQAEAQKQA) is disordered. Residues 12 to 22 (ELRKKKMEQLK) show a composition bias toward basic and acidic residues. Positions 32-45 (QEAAQQQAEAQKQA) are enriched in low complexity.

It belongs to the PDCD5 family.

The protein is DNA-binding protein rrnAC3180 of Haloarcula marismortui (strain ATCC 43049 / DSM 3752 / JCM 8966 / VKM B-1809) (Halobacterium marismortui).